We begin with the raw amino-acid sequence, 382 residues long: Mannitol-1-phosphate 5-dehydrogenase (382 aa).

3 to 14 (ALHFGAGNIGRG) is a binding site for NAD(+).

It belongs to the mannitol dehydrogenase family.

It catalyses the reaction D-mannitol 1-phosphate + NAD(+) = beta-D-fructose 6-phosphate + NADH + H(+). This chain is Mannitol-1-phosphate 5-dehydrogenase, found in Salmonella schwarzengrund (strain CVM19633).